Reading from the N-terminus, the 254-residue chain is 4-hydroxy-tetrahydrodipicolinate reductase (254 aa).

NAD(+) contacts are provided by residues 8–13 (GCSGKM), Asp35, 86–88 (CST), and 110–113 (SANM). Residue His143 is the Proton donor/acceptor of the active site. His144 provides a ligand contact to (S)-2,3,4,5-tetrahydrodipicolinate. Residue Lys147 is the Proton donor of the active site. 153–154 (GT) contacts (S)-2,3,4,5-tetrahydrodipicolinate.

It belongs to the DapB family.

The protein resides in the cytoplasm. The catalysed reaction is (S)-2,3,4,5-tetrahydrodipicolinate + NAD(+) + H2O = (2S,4S)-4-hydroxy-2,3,4,5-tetrahydrodipicolinate + NADH + H(+). The enzyme catalyses (S)-2,3,4,5-tetrahydrodipicolinate + NADP(+) + H2O = (2S,4S)-4-hydroxy-2,3,4,5-tetrahydrodipicolinate + NADPH + H(+). The protein operates within amino-acid biosynthesis; L-lysine biosynthesis via DAP pathway; (S)-tetrahydrodipicolinate from L-aspartate: step 4/4. Functionally, catalyzes the conversion of 4-hydroxy-tetrahydrodipicolinate (HTPA) to tetrahydrodipicolinate. The protein is 4-hydroxy-tetrahydrodipicolinate reductase of Clostridium perfringens (strain SM101 / Type A).